Reading from the N-terminus, the 1178-residue chain is Pyruvate carboxylase 1 (1178 aa).

The region spanning E18–Q470 is the Biotin carboxylation domain. The ATP site is built by K136, E220, and H255. Positions R140 to A337 constitute an ATP-grasp domain. Residue R312 is part of the active site. Residues T557 to R824 enclose the Pyruvate carboxyltransferase domain. Residues R565–Q569 and R638 contribute to the substrate site. A divalent metal cation is bound at residue D566. A divalent metal cation-binding residues include K734, H764, and H766. An N6-carboxylysine modification is found at K734. T898 contacts substrate. The region spanning K1094–E1169 is the Biotinyl-binding domain. K1135 is subject to N6-biotinyllysine.

Homotetramer. The cofactor is biotin. Zn(2+) is required as a cofactor.

Its subcellular location is the cytoplasm. The catalysed reaction is hydrogencarbonate + pyruvate + ATP = oxaloacetate + ADP + phosphate + H(+). It participates in carbohydrate biosynthesis; gluconeogenesis. Pyruvate carboxylase catalyzes a 2-step reaction, involving the ATP-dependent carboxylation of the covalently attached biotin in the first step and the transfer of the carboxyl group to pyruvate in the second. This Saccharomyces cerevisiae (strain ATCC 204508 / S288c) (Baker's yeast) protein is Pyruvate carboxylase 1 (PYC1).